Here is an 802-residue protein sequence, read N- to C-terminus: Threonine--tRNA ligase 2, cytoplasmic (802 aa).

Residue Ala2 is modified to N-acetylalanine. Coiled-coil stretches lie at residues 3–23 and 76–96; these read AEAL…EDIR and AEER…AQEA. Residues 86 to 98 are compositionally biased toward low complexity; sequence ESAELEAAQEAGA. The segment at 86–123 is disordered; it reads ESAELEAAQEAGAQPPPSQSQDKDMKKKKMKESEADSE. Residues 106 to 123 show a composition bias toward basic and acidic residues; that stretch reads QDKDMKKKKMKESEADSE. Positions 157 to 222 constitute a TGS domain; it reads DTSNIITVRV…EGDSSLELLT (66 aa). Position 453 is a phosphoserine (Ser453). The short motif at 786–792 is the Nuclear localization signal element; the sequence is KLKNLRK.

It belongs to the class-II aminoacyl-tRNA synthetase family. May be a component of the multisynthetase complex (MSC), a large multi-subunit complex which contains at least eight different aminoacyl-tRNA synthetases plus three auxillary subunits AIMP1, AIMP2 and EEF1E1. Interacts with the MSC components EPRS1, AIMP1, AIMP2 and KARS1.

It localises to the cytoplasm. The protein localises to the nucleus. It carries out the reaction tRNA(Thr) + L-threonine + ATP = L-threonyl-tRNA(Thr) + AMP + diphosphate + H(+). Functionally, catalyzes the attachment of threonine to tRNA(Thr) in a two-step reaction: threonine is first activated by ATP to form Thr-AMP and then transferred to the acceptor end of tRNA(Thr). Also edits incorrectly charged tRNA(Thr) via its editing domain, at the post-transfer stage. This chain is Threonine--tRNA ligase 2, cytoplasmic, found in Homo sapiens (Human).